Here is a 124-residue protein sequence, read N- to C-terminus: Ribonuclease pancreatic (124 aa).

Positions 1–13 (KETAAAKFERQHM) are enriched in basic and acidic residues. Residues 1–24 (KETAAAKFERQHMDSSTSSASSSN) are disordered. Lysine 7 and arginine 10 together coordinate substrate. Histidine 12 (proton acceptor) is an active-site residue. 4 cysteine pairs are disulfide-bonded: cysteine 26-cysteine 84, cysteine 40-cysteine 95, cysteine 58-cysteine 110, and cysteine 65-cysteine 72. Substrate-binding positions include 41 to 45 (KPVBT), lysine 66, and arginine 85. The active-site Proton donor is the histidine 119.

This sequence belongs to the pancreatic ribonuclease family. In terms of assembly, monomer. Interacts with and forms tight 1:1 complexes with RNH1. Dimerization of two such complexes may occur. Interaction with RNH1 inhibits this protein. Pancreas.

The protein resides in the secreted. It catalyses the reaction an [RNA] containing cytidine + H2O = an [RNA]-3'-cytidine-3'-phosphate + a 5'-hydroxy-ribonucleotide-3'-[RNA].. The catalysed reaction is an [RNA] containing uridine + H2O = an [RNA]-3'-uridine-3'-phosphate + a 5'-hydroxy-ribonucleotide-3'-[RNA].. Endonuclease that catalyzes the cleavage of RNA on the 3' side of pyrimidine nucleotides. Acts on single-stranded and double-stranded RNA. This is Ribonuclease pancreatic (RNASE1) from Boselaphus tragocamelus (Nilgai).